The chain runs to 229 residues: MVTHSKFPAAGMSRPLDTSLRLKTFSSKSEYQLVVNAVRKLQESGFYWSTVTGGEANLLLSAEPAGTFLIRDSSDQRHFFTLSVKTQSGTKNLRIQCEGGSFSLQSDPRSTQPVPRFDCVLKLVHHYMPAAGAPSFSQPPAEPSSSPSSEVPEQPPAQPLSGNPPRRAYYIYSGGEKIPLVLSRPLSSNVATLQHLCRKTVNGHLDSYEKVTQLPGPIREFLDQYDAPL.

The interval 22–33 is kinase inhibitory region (KIR); sequence LKTFSSKSEYQL. Residues 34-45 are extended SH2 subdomain (ESS); it reads VVNAVRKLQESG. An SH2 domain is found at 46–142; sequence FYWSTVTGGE…APSFSQPPAE (97 aa). Residues 132 to 168 are disordered; that stretch reads GAPSFSQPPAEPSSSPSSEVPEQPPAQPLSGNPPRRA. Over residues 133–152 the composition is skewed to low complexity; sequence APSFSQPPAEPSSSPSSEVP. The SOCS box domain maps to 181–228; sequence VLSRPLSSNVATLQHLCRKTVNGHLDSYEKVTQLPGPIREFLDQYDAP.

In terms of assembly, interacts with multiple activated proteins of the tyrosine kinase signaling pathway including IGF1 receptor, insulin receptor and JAK2. Binding to JAK2 is mediated through the KIR and SH2 domains to a phosphorylated tyrosine residue within the JAK2 JH1 domain. Binds specific activated tyrosine residues of the leptin, EPO, IL12, GSCF and gp130 receptors. Interaction with CSNK1E stabilizes SOCS3 protein. Component of the probable ECS(SOSC3) E3 ubiquitin-protein ligase complex which contains CUL5, RNF7/RBX2, Elongin BC complex and SOCS3. Interacts with CUL5, RNF7, ELOB and ELOC. Interacts with FGFR3. Interacts with INSR. Interacts with BCL10; this interaction may interfere with BCL10-binding with PELI2. Interacts with NOD2 (via CARD domain); the interaction promotes NOD2 degradation. In terms of processing, phosphorylated on tyrosine residues after stimulation by the cytokines, IL-2, EPO or IGF1.

It participates in protein modification; protein ubiquitination. Functionally, SOCS family proteins form part of a classical negative feedback system that regulates cytokine signal transduction. SOCS3 is involved in negative regulation of cytokines that signal through the JAK/STAT pathway. Inhibits cytokine signal transduction by binding to tyrosine kinase receptors including IL6ST/gp130, LIF, erythropoietin, insulin, IL12, GCSF and leptin receptors. Binding to JAK2 inhibits its kinase activity and regulates IL6 signaling. Suppresses fetal liver erythropoiesis. Regulates onset and maintenance of allergic responses mediated by T-helper type 2 cells. Probable substrate recognition component of a SCF-like ECS (Elongin BC-CUL2/5-SOCS-box protein) E3 ubiquitin-protein ligase complex which mediates the ubiquitination and subsequent proteasomal degradation of target proteins. The sequence is that of Suppressor of cytokine signaling 3 (SOCS3) from Bos taurus (Bovine).